Consider the following 90-residue polypeptide: Succinate dehydrogenase subunit 7, mitochondrial (90 aa).

The N-terminal 41 residues, 1-41 (MAQPAFLSALRSRLRSPQPQAPALPHLQPPRRGFHVELGAR), are a transit peptide targeting the mitochondrion.

Component of complex II composed of eight subunits in plants: four classical SDH subunits SDH1, SDH2, SDH3 and SDH4 (a flavoprotein (FP), an iron-sulfur protein (IP), and a cytochrome b composed of a large and a small subunit.), as well as four subunits unknown in mitochondria from bacteria and heterotrophic eukaryotes.

It is found in the mitochondrion inner membrane. It participates in carbohydrate metabolism; tricarboxylic acid cycle. The chain is Succinate dehydrogenase subunit 7, mitochondrial from Oryza sativa subsp. japonica (Rice).